Reading from the N-terminus, the 283-residue chain is Protein FAM170B (283 aa).

The segment covering 1–11 (MKCYFTDHRGE) has biased composition (basic and acidic residues). Disordered regions lie at residues 1–58 (MKCY…REEG) and 246–283 (AQGQ…QEKQ).

The protein belongs to the FAM170 family. Interacts with GOPC. In terms of tissue distribution, exclusively expressed in adult testis.

It localises to the cytoplasmic vesicle. The protein localises to the secretory vesicle. It is found in the acrosome. Its subcellular location is the acrosome outer membrane. Functionally, plays a role in fertilization through the acrosome reaction. The protein is Protein FAM170B of Homo sapiens (Human).